The sequence spans 199 residues: Transgelin-3 (199 aa).

Residues 24 to 136 form the Calponin-homology (CH) domain; the sequence is ADLENKLVDW…RTLMALGSVA (113 aa). S163 is subject to Phosphoserine. Residues 174–199 form a Calponin-like repeat; the sequence is IGLQMGSNKGASQAGMTGYGMPRQIM. Polar residues predominate over residues 178 to 188; it reads MGSNKGASQAG. The segment at 178–199 is disordered; that stretch reads MGSNKGASQAGMTGYGMPRQIM.

Belongs to the calponin family.

This chain is Transgelin-3 (Tagln3), found in Mus musculus (Mouse).